The primary structure comprises 317 residues: Carbonic anhydrase 6 (317 aa).

The first 17 residues, 1-17 (MRALVSVVSLFFLGIQA), serve as a signal peptide directing secretion. Positions 19–277 (SDWSYSGDDG…NNHRVVEANF (259 aa)) constitute an Alpha-carbonic anhydrase domain. A disulfide bond links C41 and C223. The active-site Proton donor/acceptor is the H84. Zn(2+) is bound by residues H110, H112, and H137. 219–220 (TT) is a substrate binding site. A glycan (N-linked (GlcNAc...) asparagine) is linked at N255.

Belongs to the alpha-carbonic anhydrase family. It depends on Zn(2+) as a cofactor. In terms of tissue distribution, major constituent of saliva.

It localises to the secreted. The enzyme catalyses hydrogencarbonate + H(+) = CO2 + H2O. Functionally, reversible hydration of carbon dioxide. Its role in saliva is unknown. The chain is Carbonic anhydrase 6 (Ca6) from Mus musculus (Mouse).